The sequence spans 376 residues: Drebrin-like protein B (376 aa).

The ADF-H domain occupies 2-133 (SVNLSKNGAA…EPESIMEKVA (132 aa)). Residues 175-231 (KENFWAKAEKDEEERRIEEHRRANVEKDRLERERKEREQREAEERERRFRERSKEID) adopt a coiled-coil conformation. Residues 202-242 (DRLERERKEREQREAEERERRFRERSKEIDGHRKQQEEVEK) are compositionally biased toward basic and acidic residues. Residues 202-288 (DRLERERKER…FTASQQEEEN (87 aa)) are disordered. The span at 268-283 (ESGSVSAQPEQFTASQ) shows a compositional bias: polar residues. In terms of domain architecture, SH3 spans 317-376 (DSGMCARALYDYQAADDTEISFDPDDVIIQIEMIDDGWWRGVAPSGHFGMFPANYVELLE).

The protein belongs to the ABP1 family.

It is found in the cytoplasm. Its subcellular location is the cytoskeleton. The protein resides in the cell projection. It localises to the lamellipodium. The protein localises to the ruffle. It is found in the cell cortex. Its subcellular location is the cytosol. The protein resides in the synapse. It localises to the perikaryon. The protein localises to the neuron projection. It is found in the cell membrane. Its subcellular location is the cytoplasmic vesicle. The protein resides in the clathrin-coated vesicle membrane. It localises to the golgi apparatus membrane. The protein localises to the podosome. It is found in the early endosome. Its subcellular location is the dendrite. The protein resides in the postsynaptic density. Its function is as follows. Adapter protein that binds F-actin and dynamin, and thereby plays a role in receptor-mediated endocytosis. Plays a role in the reorganization of the actin cytoskeleton, formation of cell projections, such as neurites, in neuron morphogenesis and synapse formation. Does not bind G-actin and promote actin polymerization by itself, but excerts its functions by interaction with other proteins. Required for the formation of organized podosome rosettes. This Xenopus laevis (African clawed frog) protein is Drebrin-like protein B (dbnl-b).